Here is a 158-residue protein sequence, read N- to C-terminus: MNFTSLLQDGIYEVGNGAIVTDQSPYLGITPDYQGAYGFPTHPWGIFFQVVGAILVFGAYLPAVIKVLISKRTENLAIGMWIISIAGLGLLAIFAWLGVSVNPGGFILVALSETLSCIASIIVFALKIANKAKAKAAGMTELEYCNLHYPIVKKLPKR.

A run of 3 helical transmembrane segments spans residues 45–65, 76–96, and 106–126; these read GIFF…PAVI, LAIG…IFAW, and FILV…VFAL.

It to U.parvum UU007, UU041 and UU042.

The protein resides in the cell membrane. This is an uncharacterized protein from Ureaplasma parvum serovar 3 (strain ATCC 700970).